The following is a 281-amino-acid chain: Pantothenate synthetase (281 aa).

26–33 (MGNLHDGH) contacts ATP. His-33 serves as the catalytic Proton donor. A (R)-pantoate-binding site is contributed by Gln-57. Gln-57 contributes to the beta-alanine binding site. 145 to 148 (GEKD) contributes to the ATP binding site. Residue Gln-151 participates in (R)-pantoate binding. 182–185 (MSSR) is a binding site for ATP.

It belongs to the pantothenate synthetase family. As to quaternary structure, homodimer.

The protein resides in the cytoplasm. It carries out the reaction (R)-pantoate + beta-alanine + ATP = (R)-pantothenate + AMP + diphosphate + H(+). It participates in cofactor biosynthesis; (R)-pantothenate biosynthesis; (R)-pantothenate from (R)-pantoate and beta-alanine: step 1/1. In terms of biological role, catalyzes the condensation of pantoate with beta-alanine in an ATP-dependent reaction via a pantoyl-adenylate intermediate. This is Pantothenate synthetase from Idiomarina loihiensis (strain ATCC BAA-735 / DSM 15497 / L2-TR).